Consider the following 216-residue polypeptide: Probable nicotinate-nucleotide adenylyltransferase (216 aa).

This sequence belongs to the NadD family.

The catalysed reaction is nicotinate beta-D-ribonucleotide + ATP + H(+) = deamido-NAD(+) + diphosphate. Its pathway is cofactor biosynthesis; NAD(+) biosynthesis; deamido-NAD(+) from nicotinate D-ribonucleotide: step 1/1. Catalyzes the reversible adenylation of nicotinate mononucleotide (NaMN) to nicotinic acid adenine dinucleotide (NaAD). The polypeptide is Probable nicotinate-nucleotide adenylyltransferase (Geobacter sp. (strain M21)).